The sequence spans 357 residues: Heat-inducible transcription repressor HrcA (357 aa).

Belongs to the HrcA family.

Functionally, negative regulator of class I heat shock genes (grpE-dnaK-dnaJ and groELS operons). Prevents heat-shock induction of these operons. This Chlorobium limicola (strain DSM 245 / NBRC 103803 / 6330) protein is Heat-inducible transcription repressor HrcA.